We begin with the raw amino-acid sequence, 262 residues long: Small ribosomal subunit protein mS23 (262 aa).

Acidic residues predominate over residues 242-254 (AAEEQETSLDDDA). A disordered region spans residues 242-262 (AAEEQETSLDDDATEKVAVAA).

This sequence belongs to the mitochondrion-specific ribosomal protein mS23 family. In terms of assembly, component of the mitochondrial small ribosomal subunit.

It is found in the mitochondrion. This Aspergillus niger (strain ATCC MYA-4892 / CBS 513.88 / FGSC A1513) protein is Small ribosomal subunit protein mS23 (rsm25).